Reading from the N-terminus, the 649-residue chain is Echinoderm microtubule-associated protein-like 2 (649 aa).

The segment at 10–649 (KEVIFSMEEG…DTSVLQWRVA (640 aa)) is tandem atypical propeller in EMLs. 12 WD repeats span residues 56–93 (KLDWVYGYRGRDCRANLYLLPTGEVVYFVASVAVLYSV), 97–144 (RQRH…VWDS), 151–192 (HVLG…VWDW), 195–234 (ESKVVDSKCSNEAVLVATFHPTDPSLLITCGKSHIYFWSL), 241–280 (KRQGLFEKHEKPKYVLCVTFLEGGDVVTGDSGGNLYVWGK), 285–323 (ITQEVQGAHDGGVFALCALRDGTLVSGGGRDRRVVLWGS), 369–406 (FSLLVQGHVEELWGLATHPSRAQFVTCGQDKLVHLWSS), 410–447 (QPVWSRSIEDPARSAGFHPSGSVLAVGTVTGRWLLLDT), 452–489 (LVAIHTDGNEQISVVSFSPDGAYLAVGSHDNLVYVYTV), 495–535 (KVSR…YWDP), 564–602 (FGIWPEGADGTDINAVARSHDGKLLVSADDFGKVHLFSY), and 609–648 (ALSHKYGGHSSHVTNVAFLWDDSMALTTGGKDTSVLQWRV). Positions 65–106 (GRDCRANLYLLPTGEVVYFVASVAVLYSVEEQRQRHYLGHND) form a coiled coil.

This sequence belongs to the WD repeat EMAP family. As to quaternary structure, interacts with GRID2 and may also interact with GRID1. Interacts with EML3. Binds unpolymerized tubulins via its WD repeat region.

It localises to the cytoplasm. Its subcellular location is the cytoskeleton. It is found in the spindle. In terms of biological role, tubulin binding protein that inhibits microtubule nucleation and growth, resulting in shorter microtubules. This is Echinoderm microtubule-associated protein-like 2 (Eml2) from Mus musculus (Mouse).